We begin with the raw amino-acid sequence, 273 residues long: Shikimate dehydrogenase (NADP(+)) (273 aa).

Shikimate is bound by residues serine 14 to serine 16 and threonine 61. Lysine 65 serves as the catalytic Proton acceptor. Glutamate 77 lines the NADP(+) pocket. Residues asparagine 86 and aspartate 102 each coordinate shikimate. NADP(+)-binding positions include glycine 126 to alanine 130, asparagine 150 to lysine 155, and methionine 214. Tyrosine 216 is a binding site for shikimate. Glycine 238 provides a ligand contact to NADP(+).

It belongs to the shikimate dehydrogenase family. In terms of assembly, homodimer.

It carries out the reaction shikimate + NADP(+) = 3-dehydroshikimate + NADPH + H(+). Its pathway is metabolic intermediate biosynthesis; chorismate biosynthesis; chorismate from D-erythrose 4-phosphate and phosphoenolpyruvate: step 4/7. Involved in the biosynthesis of the chorismate, which leads to the biosynthesis of aromatic amino acids. Catalyzes the reversible NADPH linked reduction of 3-dehydroshikimate (DHSA) to yield shikimate (SA). The chain is Shikimate dehydrogenase (NADP(+)) from Photobacterium profundum (strain SS9).